Reading from the N-terminus, the 2193-residue chain is MQSGGSGGGPARNPAMGPAGRTASTSSAASPSSSSSSVQQQQQQQQQQQQQQQLASRQQQQQHRNSDTNENMFAYQPGGVQGMMGGGNFASSPGSMQMPQQSRNFFESPQQQQQQQQQGSSTQEGQQNFNPMQQAYIQFAMQAQHQKAQQQARMGMVGSSSVGKDQDARMGMLNMQDLNPSSQPQASSSKPSGDQFARGERQTESSSQQRNETKSHPQQQVGTGQLMPGNMIRPMQAPQAQQLVNNMGNNQLAFAQQWQAMQAWARERNIDLSHPANASQMAHILQARMAAQQKAGEGNVASQSPSIPISSQPASSSVVPGENSPHANSASDISGQSGSAKARHALSTGSFASTSSPRMVNPAMNPFSGQGRENPMYPRHLVQPTNGMPSGNPLQTSANETPVLDQNASTKKSLGPAEHLQMQQPRQLNTPTPNLVAPSDTGPLSNSSLQSGQGTQQAQQRSGFTKQQLHVLKAQILAFRRLKKGEGSLPPELLQAISPPPLELQTQRQISPAIGKVQDRSSDKTGEDQARSLECGKESQAAASSNGPIFSKEEDNVGDTEVALTTGHSQLFQNLGKEATSTDVATKEEQQTDVFPVKSDQGADSSTQKNPRSDSTADKGKAVASDGSQSKVPPQANSPQPPKDTASARKYYGPLFDFPFFTRKLDSYGSATANANNNLTLAYDIKDLICEEGAEFLSKKRTDSLKKINGLLAKNLERKRIRPDLVLRLQIEEKKLRLSDLQSRVREEVDRQQQEIMSMPDRPYRKFVRLCERQRLEMNRQVLANQKAVREKQLKTIFQWRKKLLEAHWAIRDARTARNRGVAKYHEKMLREFSKRKDDGRNKRMEALKNNDVERYREMLLEQQTNMPGDAAERYAVLSSFLTQTEDYLHKLGGKITATKNQQEVEEAANAAAVAARLQGLSEEEVRAAATCAREEVVIRNRFTEMNAPKENSSVNKYYTLAHAVNEVVVRQPSMLQAGTLRDYQLVGLQWMLSLYNNKLNGILADEMGLGKTVQVMALIAYLMEFKGNYGPHLIIVPNAVLVNWKSELHTWLPSVSCIYYVGTKDQRSKLFSQEVCAMKFNVLVTTYEFIMYDRSKLSKVDWKYIIIDEAQRMKDRESVLARDLDRYRCQRRLLLTGTPLQNDLKELWSLLNLLLPDVFDNRKAFHDWFAQPFQKEGPAHNIEDDWLETEKKVIVIHRLHQILEPFMLRRRVEDVEGSLPAKVSVVLRCRMSAIQSAVYDWIKATGTLRVDPDDEKLRAQKNPIYQAKIYRTLNNRCMELRKACNHPLLNYPYFNDFSKDFLVRSCGKLWILDRILIKLQRTGHRVLLFSTMTKLLDILEEYLQWRRLVYRRIDGTTSLEDRESAIVDFNDPDTDCFIFLLSIRAAGRGLNLQTADTVVIYDPDPNPKNEEQAVARAHRIGQTREVKVIYMEAVVEKLSSHQKEDELRSGGSVDLEDDMAGKDRYIGSIEGLIRNNIQQYKIDMADEVINAGRFDQRTTHEERRMTLETLLHDEERYQETVHDVPSLHEVNRMIARSEEEVELFDQMDEEFDWTEEMTNHEQVPKWLRASTREVNATVADLSKKPSKNMLSSSNLIVQPGGPGGERKRGRPKSKKINYKEIEDDIAGYSEESSEERNIDSGNEEEGDIRQFDDDELTGALGDHQTNKGEFDGENPVCGYDYPPGSGSYKKNPPRDDAGSSGSSPESHRSKEMASPVSSQKFGSLSALDTRPGSVSKRLLDDLEEGEIAASGDSHIDLQRSGSWAHDRDEGDEEQVLQPTIKRKRSIRLRPRQTAERVDGSEMPAAQPLQVDRSYRSKLRTVVDSHSSRQDQSDSSSRLRSVPAKKVASTSKLHVSSPKSGRLNATQLTVEDNAEASRETWDGTSPISSSNAGARMSHIIQKRCKIVISKLQRRIDKEGQQIVPMLTNLWKRIQNGYAAGGVNNLLELREIDHRVERLEYAGVMELASDVQLMLRGAMQFYGFSHEVRSEAKKVHNLFFDLLKMSFPDTDFREARNALSFSGSAPTLVSTPTPRGAGISQGKRQKLVNEPETEPSSPQRSQQRENSRIRVQIPQKETKLGGTTSHTDESPILAHPGELVICKKKRKDREKSGPKTRTGGSSSPVSPPPAMIGRGLRSPVSGGVPRETRLAQQQRWPNQPTHPNNSGAAGDSVGWANPVKRLRTDSGKRRPSHL.

N-acetylmethionine is present on Met1. The span at 1 to 10 (MQSGGSGGGP) shows a compositional bias: gly residues. Disordered stretches follow at residues 1-126 (MQSG…QEGQ), 175-231 (MQDL…PGNM), 293-466 (QKAG…GFTK), 511-558 (SPAI…DNVG), and 580-649 (TSTD…ASAR). Over residues 23-62 (ASTSSAASPSSSSSSVQQQQQQQQQQQQQQQLASRQQQQQ) the composition is skewed to low complexity. The stretch at 38-58 (VQQQQQQQQQQQQQQQLASRQ) forms a coiled coil. Residues 79 to 88 (GVQGMMGGGN) show a composition bias toward gly residues. Low complexity-rich tracts occupy residues 91–102 (SSPGSMQMPQQS), 110–126 (QQQQ…QEGQ), and 180–192 (PSSQ…SKPS). The segment covering 204–223 (ESSSQQRNETKSHPQQQVGT) has biased composition (polar residues). Positions 301–320 (ASQSPSIPISSQPASSSVVP) are enriched in low complexity. Polar residues-rich tracts occupy residues 325-339 (PHAN…QSGS), 347-358 (STGSFASTSSPR), 383-412 (QPTN…STKK), and 421-433 (QMQQ…TPTP). Low complexity predominate over residues 445 to 463 (SNSSLQSGQGTQQAQQRSG). In terms of domain architecture, QLQ spans 463–499 (GFTKQQLHVLKAQILAFRRLKKGEGSLPPELLQAISP). 2 stretches are compositionally biased toward basic and acidic residues: residues 517–537 (VQDR…ECGK) and 611–621 (PRSDSTADKGK). Positions 626 to 638 (DGSQSKVPPQANS) are enriched in polar residues. The short motif at 705–712 (LKKINGLL) is the Nuclear localization signal 1 element. Residues 726-795 (VLRLQIEEKK…QKAVREKQLK (70 aa)) adopt a coiled-coil conformation. A Helicase ATP-binding domain is found at 993 to 1158 (LSLYNNKLNG…WSLLNLLLPD (166 aa)). Residue 1006–1013 (DEMGLGKT) coordinates ATP. Positions 1109-1129 (DEAQRMKDRESVLARDLDRYR) form a coiled coil. Positions 1312–1489 (ILDRILIKLQ…QYKIDMADEV (178 aa)) constitute a Helicase C-terminal domain. Disordered regions lie at residues 1583-1775 (SKKP…DEEQ) and 1789-1894 (LRPR…NAGA). The span at 1608–1617 (KRGRPKSKKI) shows a compositional bias: basic residues. Residues 1618–1638 (NYKEIEDDIAGYSEESSEERN) are a coiled coil. Position 1641 is a phosphoserine (Ser1641). Positions 1642-1657 (GNEEEGDIRQFDDDEL) are enriched in acidic residues. Residues 1821 to 1832 (TVVDSHSSRQDQ) are compositionally biased toward basic and acidic residues. Positions 1833 to 1842 (SDSSSRLRSV) are enriched in low complexity. 2 stretches are compositionally biased toward polar residues: residues 1848–1870 (ASTS…QLTV) and 1882–1892 (DGTSPISSSNA). Residues 1895-2005 (RMSHIIQKRC…NLFFDLLKMS (111 aa)) form the Bromo domain. Residues 1901 to 1908 (QKRCKIVI) carry the Nuclear localization signal 2 motif. A compositionally biased stretch (polar residues) spans 2022–2032 (GSAPTLVSTPT). Residues 2022–2193 (GSAPTLVSTP…DSGKRRPSHL (172 aa)) form a disordered region. Ser2137 is subject to Phosphoserine. Residues 2149-2166 (LAQQQRWPNQPTHPNNSG) are compositionally biased toward polar residues.

It belongs to the SNF2/RAD54 helicase family. As to quaternary structure, interacts with SWI3B, SWI3C, H3 and H4, but not with SWI3A, SWI3D or BSH. Interacts with LFY. Interacts with REF6. Binds to FGT1. In terms of tissue distribution, highly expressed in inflorescences and leaves. Low expression in siliques, roots and seedlings. Detected in shoot apical meristem, root meristem, vascular tissue of developing leaves, petals, stamens filaments, anthers and carpels.

It localises to the nucleus. It carries out the reaction ATP + H2O = ADP + phosphate + H(+). Its function is as follows. ATPase subunit of a multiprotein complex equivalent of the SWI/SNF complex that acts by remodeling the chromatin by catalyzing an ATP-dependent alteration in the structure of nucleosomal DNA. Represses embryonic genes in leaves and controls shoot development and flowering. Activates flower homeotic genes. The association of BRM with its target genes requires REF6. Necessary to acquire heat stress (HS) memory, by globally binding to HS memory genes. This Arabidopsis thaliana (Mouse-ear cress) protein is ATP-dependent helicase BRM.